Reading from the N-terminus, the 292-residue chain is 2-(5''-triphosphoribosyl)-3'-dephosphocoenzyme-A synthase (292 aa).

This sequence belongs to the CitG/MdcB family.

It catalyses the reaction 3'-dephospho-CoA + ATP = 2'-(5''-triphospho-alpha-D-ribosyl)-3'-dephospho-CoA + adenine. Catalyzes the formation of 2-(5''-triphosphoribosyl)-3'-dephosphocoenzyme-A, the precursor of the prosthetic group of the holo-acyl carrier protein (gamma chain) of citrate lyase, from ATP and dephospho-CoA. The sequence is that of 2-(5''-triphosphoribosyl)-3'-dephosphocoenzyme-A synthase from Escherichia coli O139:H28 (strain E24377A / ETEC).